We begin with the raw amino-acid sequence, 99 residues long: Aspartyl/glutamyl-tRNA(Asn/Gln) amidotransferase subunit C (99 aa).

The protein belongs to the GatC family. Heterotrimer of A, B and C subunits.

The enzyme catalyses L-glutamyl-tRNA(Gln) + L-glutamine + ATP + H2O = L-glutaminyl-tRNA(Gln) + L-glutamate + ADP + phosphate + H(+). It carries out the reaction L-aspartyl-tRNA(Asn) + L-glutamine + ATP + H2O = L-asparaginyl-tRNA(Asn) + L-glutamate + ADP + phosphate + 2 H(+). Functionally, allows the formation of correctly charged Asn-tRNA(Asn) or Gln-tRNA(Gln) through the transamidation of misacylated Asp-tRNA(Asn) or Glu-tRNA(Gln) in organisms which lack either or both of asparaginyl-tRNA or glutaminyl-tRNA synthetases. The reaction takes place in the presence of glutamine and ATP through an activated phospho-Asp-tRNA(Asn) or phospho-Glu-tRNA(Gln). The polypeptide is Aspartyl/glutamyl-tRNA(Asn/Gln) amidotransferase subunit C (Thermobifida fusca (strain YX)).